A 157-amino-acid chain; its full sequence is Transcription antitermination protein NusB (157 aa).

Belongs to the NusB family.

Functionally, involved in transcription antitermination. Required for transcription of ribosomal RNA (rRNA) genes. Binds specifically to the boxA antiterminator sequence of the ribosomal RNA (rrn) operons. This is Transcription antitermination protein NusB from Helicobacter hepaticus (strain ATCC 51449 / 3B1).